We begin with the raw amino-acid sequence, 428 residues long: 3-phosphoshikimate 1-carboxyvinyltransferase (428 aa).

Residues Lys21, Ser22, and Arg26 each coordinate 3-phosphoshikimate. Residue Lys21 coordinates phosphoenolpyruvate. Phosphoenolpyruvate contacts are provided by Gly91 and Arg119. Residues Ser164, Gln166, Asp313, and Lys340 each coordinate 3-phosphoshikimate. Gln166 contributes to the phosphoenolpyruvate binding site. Asp313 functions as the Proton acceptor in the catalytic mechanism. Residues Arg344 and Arg386 each contribute to the phosphoenolpyruvate site.

Belongs to the EPSP synthase family. In terms of assembly, monomer.

It localises to the cytoplasm. The catalysed reaction is 3-phosphoshikimate + phosphoenolpyruvate = 5-O-(1-carboxyvinyl)-3-phosphoshikimate + phosphate. Its pathway is metabolic intermediate biosynthesis; chorismate biosynthesis; chorismate from D-erythrose 4-phosphate and phosphoenolpyruvate: step 6/7. Functionally, catalyzes the transfer of the enolpyruvyl moiety of phosphoenolpyruvate (PEP) to the 5-hydroxyl of shikimate-3-phosphate (S3P) to produce enolpyruvyl shikimate-3-phosphate and inorganic phosphate. The chain is 3-phosphoshikimate 1-carboxyvinyltransferase from Campylobacter jejuni subsp. jejuni serotype O:2 (strain ATCC 700819 / NCTC 11168).